A 136-amino-acid polypeptide reads, in one-letter code: Class I hydrophobin A (136 aa).

The N-terminal stretch at 1-16 (MRFALAITTLIAAVTA) is a signal peptide. Disulfide bonds link Cys39–Cys109, Cys47–Cys103, Cys48–Cys85, and Cys110–Cys128.

Belongs to the fungal hydrophobin family. Expressed in aerial conidia, in vitro blastospores, submerged conidia, and cells sporulating on chitin and insect cuticle, with hyd1 expression peaking in growing mycelia.

It localises to the secreted. The protein localises to the cell wall. Its subcellular location is the spore coat. The protein resides in the vacuole. It is found in the cytoplasmic vesicle. Aerial growth, conidiation, and dispersal of filamentous fungi in the environment rely upon a capability of their secreting small amphipathic proteins called hydrophobins (HPBs) with low sequence identity. Class I can self-assemble into an outermost layer of rodlet bundles on aerial cell surfaces, conferring cellular hydrophobicity that supports fungal growth, development and dispersal; whereas Class II form highly ordered films at water-air interfaces through intermolecular interactions but contribute nothing to the rodlet structure. Hyd1A contributes to certain cell wall-related features, such as hydrophobicity but is not involved in cell wall-related events during fungal proliferation in host hemocoel. Hyd1A and hyd1B coregulate the formation, morphology and orderly assembly of rodlet bundles required for conidial hydrophobicity and infectivity. Contributes to the spore coat rodlet layer. This chain is Class I hydrophobin A, found in Beauveria bassiana (strain ARSEF 2860) (White muscardine disease fungus).